The chain runs to 58 residues: Ribosome modulation factor (58 aa).

Positions 1 to 28 (MKRQKRDRFERAHTQGFKAGLHGRSKDN) are disordered.

It belongs to the ribosome modulation factor family.

It is found in the cytoplasm. Its function is as follows. During stationary phase, converts 70S ribosomes to an inactive dimeric form (100S ribosomes). The chain is Ribosome modulation factor from Idiomarina loihiensis (strain ATCC BAA-735 / DSM 15497 / L2-TR).